The following is a 146-amino-acid chain: Hemoglobin subunit beta (146 aa).

Residues 2 to 146 (QWTAEEKQLI…VAHALARKYH (145 aa)) enclose the Globin domain. Heme b-binding residues include H63 and H92.

This sequence belongs to the globin family. In terms of assembly, heterotetramer of two alpha chains and two beta chains. As to expression, red blood cells.

In terms of biological role, involved in oxygen transport from the lung to the various peripheral tissues. In Passer montanus (Eurasian tree sparrow), this protein is Hemoglobin subunit beta (HBB).